Here is a 122-residue protein sequence, read N- to C-terminus: Large ribosomal subunit protein uL14 (122 aa).

Belongs to the universal ribosomal protein uL14 family. In terms of assembly, part of the 50S ribosomal subunit. Forms a cluster with proteins L3 and L19. In the 70S ribosome, L14 and L19 interact and together make contacts with the 16S rRNA in bridges B5 and B8.

Its function is as follows. Binds to 23S rRNA. Forms part of two intersubunit bridges in the 70S ribosome. This Chelativorans sp. (strain BNC1) protein is Large ribosomal subunit protein uL14.